The sequence spans 149 residues: IQ domain-containing protein F5 (149 aa).

IQ domains follow at residues 12 to 41 (ENKA…RAWI) and 68 to 97 (QEWA…AVRI).

This Bos taurus (Bovine) protein is IQ domain-containing protein F5 (IQCF5).